Reading from the N-terminus, the 503-residue chain is Cytochrome P450 7A1 (503 aa).

Residues 4–24 (ISLIWGIAVVVSCCIWFIIGI) traverse the membrane as a helical segment. Cys-444 contacts heme.

Belongs to the cytochrome P450 family. Requires heme as cofactor.

The protein localises to the endoplasmic reticulum membrane. Its subcellular location is the microsome membrane. The catalysed reaction is cholesterol + reduced [NADPH--hemoprotein reductase] + O2 = 7alpha-hydroxycholesterol + oxidized [NADPH--hemoprotein reductase] + H2O + H(+). The enzyme catalyses 4beta-hydroxycholesterol + reduced [NADPH--hemoprotein reductase] + O2 = 4beta,7alpha-dihydroxycholesterol + oxidized [NADPH--hemoprotein reductase] + H2O + H(+). It carries out the reaction lathosterol + reduced [NADPH--hemoprotein reductase] + O2 = 7alpha,8alpha-epoxy-5alpha-cholestan-3beta-ol + oxidized [NADPH--hemoprotein reductase] + H2O + H(+). It catalyses the reaction lathosterol + reduced [NADPH--hemoprotein reductase] + O2 = 5alpha-cholestan-7-oxo-3beta-ol + oxidized [NADPH--hemoprotein reductase] + H2O + H(+). The catalysed reaction is 7-dehydrocholesterol + reduced [NADPH--hemoprotein reductase] + O2 = 7-oxocholesterol + oxidized [NADPH--hemoprotein reductase] + H2O + H(+). The enzyme catalyses (24S)-hydroxycholesterol + reduced [NADPH--hemoprotein reductase] + O2 = (24S)-7alpha-dihydroxycholesterol + oxidized [NADPH--hemoprotein reductase] + H2O + H(+). It carries out the reaction (24R)-hydroxycholesterol + reduced [NADPH--hemoprotein reductase] + O2 = (24R)-7alpha-dihydroxycholesterol + oxidized [NADPH--hemoprotein reductase] + H2O + H(+). The protein operates within lipid metabolism; bile acid biosynthesis. Its pathway is steroid metabolism; cholesterol degradation. Its function is as follows. A cytochrome P450 monooxygenase involved in the metabolism of endogenous cholesterol and its oxygenated derivatives (oxysterols). Mechanistically, uses molecular oxygen inserting one oxygen atom into a substrate, and reducing the second into a water molecule, with two electrons provided by NADPH via cytochrome P450 reductase (CPR; NADPH-ferrihemoprotein reductase). Functions as a critical regulatory enzyme of bile acid biosynthesis and cholesterol homeostasis. Catalyzes the hydroxylation of carbon hydrogen bond at 7-alpha position of cholesterol, a rate-limiting step in cholesterol catabolism and bile acid biosynthesis. 7-alpha hydroxylates several oxysterols, including 4beta-hydroxycholesterol and 24-hydroxycholesterol. Catalyzes the oxidation of the 7,8 double bond of 7-dehydrocholesterol and lathosterol with direct and predominant formation of the 7-keto derivatives. The sequence is that of Cytochrome P450 7A1 from Mus musculus (Mouse).